The following is a 132-amino-acid chain: Ribosome-binding factor A (132 aa).

Belongs to the RbfA family. Monomer. Binds 30S ribosomal subunits, but not 50S ribosomal subunits or 70S ribosomes.

It is found in the cytoplasm. Its function is as follows. One of several proteins that assist in the late maturation steps of the functional core of the 30S ribosomal subunit. Associates with free 30S ribosomal subunits (but not with 30S subunits that are part of 70S ribosomes or polysomes). Required for efficient processing of 16S rRNA. May interact with the 5'-terminal helix region of 16S rRNA. The sequence is that of Ribosome-binding factor A from Caldicellulosiruptor bescii (strain ATCC BAA-1888 / DSM 6725 / KCTC 15123 / Z-1320) (Anaerocellum thermophilum).